Reading from the N-terminus, the 369-residue chain is MTQKTILNDTHRALGAKMVDFGGWDMPIHYGSQLDEHHQVRRDAGMFDVSHMTVVDLHGARVREFLRYLLANSVDKLKVSGKALYTCMLNPQGGVIDDLIVYYMTEDFFRLVVNAATREKDLQWIGEQAARFDVRVEERSDFAMIAVQGPGARTKVIDLLDPADTAAASKLGRFAALQTRSRDGIDLFLARTGYTGEDGFEIVLPQEAAVAFWNALLAQGVKPAGLGARDTLRLEAGMNLYGQDMDDGVTPYEAGLAWTIALDEGRDFIGRSVLEYQKAQGAPRQLIGVVMDEKGVLRHGQTVLTASGEGEILSGTFSPTLGKAIAFARVPAGSIEQLRVDIRGKQVPLRAVKFPFVRDGQAQPGVLGD.

This sequence belongs to the GcvT family. As to quaternary structure, the glycine cleavage system is composed of four proteins: P, T, L and H.

The catalysed reaction is N(6)-[(R)-S(8)-aminomethyldihydrolipoyl]-L-lysyl-[protein] + (6S)-5,6,7,8-tetrahydrofolate = N(6)-[(R)-dihydrolipoyl]-L-lysyl-[protein] + (6R)-5,10-methylene-5,6,7,8-tetrahydrofolate + NH4(+). Its function is as follows. The glycine cleavage system catalyzes the degradation of glycine. The protein is Aminomethyltransferase of Xanthomonas euvesicatoria pv. vesicatoria (strain 85-10) (Xanthomonas campestris pv. vesicatoria).